We begin with the raw amino-acid sequence, 249 residues long: Sesquipedalian-1 (249 aa).

Positions 17–113 (PVDNAGFLYK…WVKALSRASF (97 aa)) constitute a PH domain. Disordered regions lie at residues 134-159 (GGMA…LAPV) and 194-219 (EATF…HGPL). Over residues 140–152 (QPQPQSLPLPPSL) the composition is skewed to pro residues. A Phosphoserine modification is found at serine 213. Positions 223 to 235 (PFARLHECYGQEI) match the F&amp;H motif.

Belongs to the sesquipedalian family. Forms homodimers and heterodimers with PHETA2. Interacts with OCRL and INPP5B. Interaction with OCRL may be important for endosomal morphology and function.

It localises to the early endosome. It is found in the recycling endosome. The protein resides in the golgi apparatus. Its subcellular location is the trans-Golgi network. The protein localises to the cytoplasmic vesicle. It localises to the clathrin-coated vesicle. In terms of biological role, plays a role in endocytic trafficking. Required for receptor recycling from endosomes, both to the trans-Golgi network and the plasma membrane. This chain is Sesquipedalian-1, found in Homo sapiens (Human).